We begin with the raw amino-acid sequence, 300 residues long: Phospholipase A1 (300 aa).

Cys-4 and Cys-87 are joined by a disulfide. Ser-137 functions as the Nucleophile in the catalytic mechanism. The active-site Charge relay system is the Asp-165. Intrachain disulfides connect Cys-176-Cys-181 and Cys-219-Cys-227. The active-site Charge relay system is the His-229. Intrachain disulfides connect Cys-244–Cys-268, Cys-245–Cys-293, and Cys-261–Cys-266.

The protein belongs to the AB hydrolase superfamily. Lipase family. Expressed by the venom gland.

It localises to the secreted. The enzyme catalyses a 1,2-diacyl-sn-glycero-3-phosphocholine + H2O = a 2-acyl-sn-glycero-3-phosphocholine + a fatty acid + H(+). Functionally, catalyzes the hydrolysis of phosphatidylcholine with phospholipase A1 activity. May act as an allergen and induce hemolytic activity. This Vespula maculifrons (Eastern yellow jacket) protein is Phospholipase A1.